Reading from the N-terminus, the 343-residue chain is Holliday junction branch migration complex subunit RuvB (343 aa).

Residues 1-178 are large ATPase domain (RuvB-L); the sequence is MNFVQQNREG…FGMILELQFY (178 aa). ATP contacts are provided by residues leucine 17, arginine 18, glycine 59, lysine 62, threonine 63, threonine 64, 125–127, arginine 168, tyrosine 178, and arginine 215; that span reads EDY. Threonine 63 provides a ligand contact to Mg(2+). Residues 179–249 are small ATPAse domain (RuvB-S); sequence TVKELMEIIK…LVEKTMDILE (71 aa). The head domain (RuvB-H) stretch occupies residues 252–343; the sequence is KLGLDEMDRK…DESLRKSDES (92 aa). Positions 307 and 312 each coordinate DNA.

The protein belongs to the RuvB family. In terms of assembly, homohexamer. Forms an RuvA(8)-RuvB(12)-Holliday junction (HJ) complex. HJ DNA is sandwiched between 2 RuvA tetramers; dsDNA enters through RuvA and exits via RuvB. An RuvB hexamer assembles on each DNA strand where it exits the tetramer. Each RuvB hexamer is contacted by two RuvA subunits (via domain III) on 2 adjacent RuvB subunits; this complex drives branch migration. In the full resolvosome a probable DNA-RuvA(4)-RuvB(12)-RuvC(2) complex forms which resolves the HJ.

The protein resides in the cytoplasm. It catalyses the reaction ATP + H2O = ADP + phosphate + H(+). Functionally, the RuvA-RuvB-RuvC complex processes Holliday junction (HJ) DNA during genetic recombination and DNA repair, while the RuvA-RuvB complex plays an important role in the rescue of blocked DNA replication forks via replication fork reversal (RFR). RuvA specifically binds to HJ cruciform DNA, conferring on it an open structure. The RuvB hexamer acts as an ATP-dependent pump, pulling dsDNA into and through the RuvAB complex. RuvB forms 2 homohexamers on either side of HJ DNA bound by 1 or 2 RuvA tetramers; 4 subunits per hexamer contact DNA at a time. Coordinated motions by a converter formed by DNA-disengaged RuvB subunits stimulates ATP hydrolysis and nucleotide exchange. Immobilization of the converter enables RuvB to convert the ATP-contained energy into a lever motion, pulling 2 nucleotides of DNA out of the RuvA tetramer per ATP hydrolyzed, thus driving DNA branch migration. The RuvB motors rotate together with the DNA substrate, which together with the progressing nucleotide cycle form the mechanistic basis for DNA recombination by continuous HJ branch migration. Branch migration allows RuvC to scan DNA until it finds its consensus sequence, where it cleaves and resolves cruciform DNA. In Pseudothermotoga lettingae (strain ATCC BAA-301 / DSM 14385 / NBRC 107922 / TMO) (Thermotoga lettingae), this protein is Holliday junction branch migration complex subunit RuvB.